A 288-amino-acid polypeptide reads, in one-letter code: Quinate/shikimate dehydrogenase (288 aa).

Substrate-binding residues include Lys71 and Asp107. Residues 132 to 135, 155 to 158, Lys205, 232 to 235, and Gly255 each bind NAD(+); these read AGGA, NRRD, and CVYN.

Belongs to the shikimate dehydrogenase family. As to quaternary structure, homodimer.

It catalyses the reaction L-quinate + NAD(+) = 3-dehydroquinate + NADH + H(+). It carries out the reaction L-quinate + NADP(+) = 3-dehydroquinate + NADPH + H(+). The catalysed reaction is shikimate + NADP(+) = 3-dehydroshikimate + NADPH + H(+). The enzyme catalyses shikimate + NAD(+) = 3-dehydroshikimate + NADH + H(+). It functions in the pathway metabolic intermediate biosynthesis; chorismate biosynthesis; chorismate from D-erythrose 4-phosphate and phosphoenolpyruvate: step 4/7. Functionally, the actual biological function of YdiB remains unclear, nor is it known whether 3-dehydroshikimate or quinate represents the natural substrate. Catalyzes the reversible NAD-dependent reduction of both 3-dehydroshikimate (DHSA) and 3-dehydroquinate to yield shikimate (SA) and quinate, respectively. It can use both NAD or NADP for catalysis, however it has higher catalytic efficiency with NAD. The chain is Quinate/shikimate dehydrogenase from Escherichia coli (strain SMS-3-5 / SECEC).